Here is a 525-residue protein sequence, read N- to C-terminus: Chromosomal replication initiator protein DnaA (525 aa).

Residues 1–71 are domain I, interacts with DnaA modulators; the sequence is MNDFWQHCSA…ADLAREFWNT (71 aa). Residues 71-188 are domain II; sequence TPIEVQFVLD…GEADSMYERS (118 aa). A disordered region spans residues 160-182; it reads AAAGRRTWRPGPGAAPANGGEAD. The segment covering 169–181 has biased composition (low complexity); that stretch reads PGPGAAPANGGEA. The segment at 189-405 is domain III, AAA+ region; it reads KLNPVLTFDN…GALRKILAYS (217 aa). Positions 233, 235, 236, and 237 each coordinate ATP. Residues 406 to 525 are domain IV, binds dsDNA; the sequence is KFHGREISIE…LHVLEQTLKG (120 aa).

Belongs to the DnaA family. In terms of assembly, oligomerizes as a right-handed, spiral filament on DNA at oriC.

The protein localises to the cytoplasm. In terms of biological role, plays an essential role in the initiation and regulation of chromosomal replication. ATP-DnaA binds to the origin of replication (oriC) to initiate formation of the DNA replication initiation complex once per cell cycle. Binds the DnaA box (a 9 base pair repeat at the origin) and separates the double-stranded (ds)DNA. Forms a right-handed helical filament on oriC DNA; dsDNA binds to the exterior of the filament while single-stranded (ss)DNA is stabiized in the filament's interior. The ATP-DnaA-oriC complex binds and stabilizes one strand of the AT-rich DNA unwinding element (DUE), permitting loading of DNA polymerase. After initiation quickly degrades to an ADP-DnaA complex that is not apt for DNA replication. Binds acidic phospholipids. The sequence is that of Chromosomal replication initiator protein DnaA from Burkholderia cenocepacia (strain ATCC BAA-245 / DSM 16553 / LMG 16656 / NCTC 13227 / J2315 / CF5610) (Burkholderia cepacia (strain J2315)).